A 760-amino-acid polypeptide reads, in one-letter code: RxLR effector protein PSR2 (760 aa).

Residues M1–A21 form the signal peptide. The short motif at R47–R62 is the RxLR-dEER element. The stretch at P87–D134 is one WY1 repeat. Residues P87–Q760 are 7 X 93 AA tandem repeats. The stretch at P135 to N221 is one LWY2 repeat. The LWY3 repeat unit spans residues K222–F312. One copy of the LWY4 repeat lies at P313–P403. The stretch at E404 to F496 is one LWY5 repeat. The stretch at P497 to F584 is one LWY6 repeat. An LWY7 repeat occupies P585–Q760.

It belongs to the RxLR effector family. Interacts with host dsRNA-binding protein DRB4.

Its subcellular location is the secreted. It is found in the host cell. Secreted effector that possesses RNA silencing suppression activity by inhibiting the biogenesis of small RNAs in the host plant to promote enhanced susceptibility of host to the pathogen during infection. Interferes with secondary siRNA production by associating with host dsRNA-binding protein DRB4. Inhibits the host salicylic acid pathway during infection. This Phytophthora infestans (strain T30-4) (Potato late blight agent) protein is RxLR effector protein PSR2.